Reading from the N-terminus, the 409-residue chain is Gamma-glutamyl phosphate reductase (409 aa).

This sequence belongs to the gamma-glutamyl phosphate reductase family.

It is found in the cytoplasm. It catalyses the reaction L-glutamate 5-semialdehyde + phosphate + NADP(+) = L-glutamyl 5-phosphate + NADPH + H(+). It participates in amino-acid biosynthesis; L-proline biosynthesis; L-glutamate 5-semialdehyde from L-glutamate: step 2/2. Functionally, catalyzes the NADPH-dependent reduction of L-glutamate 5-phosphate into L-glutamate 5-semialdehyde and phosphate. The product spontaneously undergoes cyclization to form 1-pyrroline-5-carboxylate. This is Gamma-glutamyl phosphate reductase from Mycobacterium leprae (strain TN).